Here is a 147-residue protein sequence, read N- to C-terminus: Nucleoside diphosphate kinase (147 aa).

Residues lysine 11, phenylalanine 59, arginine 87, threonine 93, arginine 104, and asparagine 114 each coordinate ATP. Histidine 117 serves as the catalytic Pros-phosphohistidine intermediate.

The protein belongs to the NDK family. Mg(2+) serves as cofactor.

The protein resides in the cytoplasm. It carries out the reaction a 2'-deoxyribonucleoside 5'-diphosphate + ATP = a 2'-deoxyribonucleoside 5'-triphosphate + ADP. It catalyses the reaction a ribonucleoside 5'-diphosphate + ATP = a ribonucleoside 5'-triphosphate + ADP. In terms of biological role, major role in the synthesis of nucleoside triphosphates other than ATP. The ATP gamma phosphate is transferred to the NDP beta phosphate via a ping-pong mechanism, using a phosphorylated active-site intermediate. The chain is Nucleoside diphosphate kinase from Sulfurisphaera tokodaii (strain DSM 16993 / JCM 10545 / NBRC 100140 / 7) (Sulfolobus tokodaii).